Reading from the N-terminus, the 126-residue chain is Fluoride-specific ion channel FluC (126 aa).

The next 4 membrane-spanning stretches (helical) occupy residues 3–23, 35–55, 68–88, and 103–123; these read LSIL…WFLG, LGTL…VAYF, FIIT…AEVV, and IAIH…TVAV. Na(+) contacts are provided by Gly-75 and Ser-78.

Belongs to the fluoride channel Fluc/FEX (TC 1.A.43) family.

Its subcellular location is the cell inner membrane. The enzyme catalyses fluoride(in) = fluoride(out). Na(+) is not transported, but it plays an essential structural role and its presence is essential for fluoride channel function. Its function is as follows. Fluoride-specific ion channel. Important for reducing fluoride concentration in the cell, thus reducing its toxicity. This chain is Fluoride-specific ion channel FluC, found in Paraburkholderia phymatum (strain DSM 17167 / CIP 108236 / LMG 21445 / STM815) (Burkholderia phymatum).